A 471-amino-acid polypeptide reads, in one-letter code: Putative pentatricopeptide repeat-containing protein At1g53330 (471 aa).

PPR repeat units lie at residues 46-81, 82-116, 117-147, 151-185, 186-221, 222-256, 257-291, 292-326, 327-361, and 362-396; these read SLLCYDIIITKLGGSKMFDELDQVLLHLKTDTRIVP, TEIIFCNVINFFGRGKLPSRALHMFDEMPQYRCQR, TVKSLNSLLSALLKCGELEKMKERLSSIDEF, DACTYNILIHGCSQSGCFDDALKLFDEMVKKKVKP, TGVTFGTLIHGLCKDSRVKEALKMKHDMLKVYGVRP, TVHIYASLIKALCQIGELSFAFKLKDEAYEGKIKV, DAAIYSTLISSLIKAGRSNEVSMILEEMSEKGCKP, DTVTYNVLINGFCVENDSESANRVLDEMVEKGLKP, DVISYNMILGVFFRIKKWEEATYLFEDMPRRGCSP, and DTLSYRIVFDGLCEGLQFEEAAVILDEMLFKGYKP.

This sequence belongs to the PPR family. P subfamily.

Functionally, involved during embryo development. The chain is Putative pentatricopeptide repeat-containing protein At1g53330 from Arabidopsis thaliana (Mouse-ear cress).